Reading from the N-terminus, the 463-residue chain is Ribulose bisphosphate carboxylase (463 aa).

Asparagine 116 is a binding site for substrate. Lysine 171 (proton acceptor) is an active-site residue. Substrate is bound at residue lysine 173. Mg(2+) is bound by residues lysine 196, aspartate 198, and glutamate 199. Residue lysine 196 is modified to N6-carboxylysine. Catalysis depends on histidine 294, which acts as the Proton acceptor. Substrate contacts are provided by arginine 295, histidine 328, and serine 375.

Belongs to the RuBisCO large chain family. Type II subfamily. In terms of assembly, homodimer. It depends on Mg(2+) as a cofactor.

It catalyses the reaction 2 (2R)-3-phosphoglycerate + 2 H(+) = D-ribulose 1,5-bisphosphate + CO2 + H2O. The catalysed reaction is D-ribulose 1,5-bisphosphate + O2 = 2-phosphoglycolate + (2R)-3-phosphoglycerate + 2 H(+). Functionally, ruBisCO catalyzes two reactions: the carboxylation of D-ribulose 1,5-bisphosphate, the primary event in carbon dioxide fixation, as well as the oxidative fragmentation of the pentose substrate. Both reactions occur simultaneously and in competition at the same active site. The protein is Ribulose bisphosphate carboxylase of Hydrogenovibrio marinus.